Consider the following 327-residue polypeptide: L-lactate dehydrogenase (327 aa).

Residues Val18, Asp39, Lys44, Tyr69, and 83–84 each bind NAD(+); that span reads GA. Substrate is bound by residues Gln86, Arg92, and 124–127; that span reads NPVD. NAD(+) is bound by residues 122–124 and Ser147; that span reads AAN. 152 to 155 contributes to the substrate binding site; it reads DSAR. Beta-D-fructose 1,6-bisphosphate-binding residues include Arg157 and His172. The active-site Proton acceptor is His179. A Phosphotyrosine modification is found at Tyr224. Thr233 provides a ligand contact to substrate.

The protein belongs to the LDH/MDH superfamily. LDH family. In terms of assembly, homotetramer.

It is found in the cytoplasm. It carries out the reaction (S)-lactate + NAD(+) = pyruvate + NADH + H(+). It functions in the pathway fermentation; pyruvate fermentation to lactate; (S)-lactate from pyruvate: step 1/1. With respect to regulation, allosterically activated by fructose 1,6-bisphosphate (FBP). Functionally, catalyzes the conversion of lactate to pyruvate. This is L-lactate dehydrogenase from Streptococcus equi subsp. zooepidemicus (strain H70).